The chain runs to 338 residues: Ferredoxin--NADP reductase (338 aa).

Residues Asp35, Gln43, Tyr48, Ala88, Phe122, Asp289, and Thr330 each coordinate FAD.

The protein belongs to the ferredoxin--NADP reductase type 2 family. Homodimer. FAD serves as cofactor.

The enzyme catalyses 2 reduced [2Fe-2S]-[ferredoxin] + NADP(+) + H(+) = 2 oxidized [2Fe-2S]-[ferredoxin] + NADPH. The polypeptide is Ferredoxin--NADP reductase (Ehrlichia canis (strain Jake)).